The sequence spans 129 residues: uncharacterized protein (129 aa).

Residues 46-66 (FFHFFFSFLLHLISPAVTGGI) traverse the membrane as a helical segment.

It is found in the membrane. This is an uncharacterized protein from Saccharomyces cerevisiae (strain ATCC 204508 / S288c) (Baker's yeast).